The primary structure comprises 188 residues: Ras-related protein Rap-1 (188 aa).

Gly10–Ser17 provides a ligand contact to GTP. Positions Tyr32 to Tyr40 match the Effector region motif. Residues Asp57–Thr61 and Asn116–Asp119 contribute to the GTP site.

This sequence belongs to the small GTPase superfamily. Ras family.

The catalysed reaction is GTP + H2O = GDP + phosphate + H(+). In terms of biological role, required in the hypodermis for proper formation of the cuticle. In Caenorhabditis elegans, this protein is Ras-related protein Rap-1 (rap-1).